The chain runs to 526 residues: Vang-like protein 1 (526 aa).

Over residues 1–15 (MDTESTYSGYSYYSS) the composition is skewed to low complexity. The interval 1 to 87 (MDTESTYSGY…TTAITGTSEH (87 aa)) is disordered. At 1 to 114 (MDTESTYSGY…VGLDCKRYLG (114 aa)) the chain is on the cytoplasmic side. Positions 75-87 (GETTTAITGTSEH) are enriched in polar residues. 2 positions are modified to phosphoserine: S88 and S90. The helical transmembrane segment at 115 to 135 (LTVASFLGLLVFLTPIAFILL) threads the bilayer. Residues 136–153 (PQILWREELKPCGAICEG) lie on the Extracellular side of the membrane. Residues 154-174 (LLISVSFKLLILLIGTWALFF) form a helical membrane-spanning segment. Residues 175–184 (RKQRADVPRV) are Cytoplasmic-facing. The helical transmembrane segment at 185–205 (FVFRALLLVLIFLFVVSYWLF) threads the bilayer. Residues 206 to 224 (YGVRILDSRDQNYKDIVQY) are Extracellular-facing. The helical transmembrane segment at 225-245 (AVSLVDALLFIHYLAIVLLEL) threads the bilayer. Residues 246 to 526 (RQLQPMFTLQ…VLRLQSETSV (281 aa)) are Cytoplasmic-facing.

It belongs to the Vang family. Heterodimer with Vangl2. Interacts through its C-terminal region with the N-terminal half of DVL1, DVL2 and DVL3. The PDZ domain of DVL1, DVL2 and DVL3 is required for the interaction.

The protein localises to the cell membrane. The sequence is that of Vang-like protein 1 (Vangl1) from Mus musculus (Mouse).